The following is a 163-amino-acid chain: Small heat shock protein C4 (163 aa).

The region spanning 53 to 163 (YNNKILSPRT…QSKAKKIKIS (111 aa)) is the sHSP domain.

This sequence belongs to the small heat shock protein (HSP20) family.

In Rickettsia felis (strain ATCC VR-1525 / URRWXCal2) (Rickettsia azadi), this protein is Small heat shock protein C4 (hspc4-1).